Reading from the N-terminus, the 116-residue chain is Flagellar transcriptional regulator FlhD (116 aa).

It belongs to the FlhD family. In terms of assembly, homodimer; disulfide-linked. Forms a heterohexamer composed of two FlhC and four FlhD subunits. Each FlhC binds a FlhD dimer, forming a heterotrimer, and a hexamer assembles by dimerization of two heterotrimers.

The protein localises to the cytoplasm. Its function is as follows. Functions in complex with FlhC as a master transcriptional regulator that regulates transcription of several flagellar and non-flagellar operons by binding to their promoter region. Activates expression of class 2 flagellar genes, including fliA, which is a flagellum-specific sigma factor that turns on the class 3 genes. Also regulates genes whose products function in a variety of physiological pathways. This Pectobacterium carotovorum subsp. carotovorum (strain PC1) protein is Flagellar transcriptional regulator FlhD.